The following is a 299-amino-acid chain: Sodium/potassium-transporting ATPase subunit beta-2 (299 aa).

Topologically, residues 1 to 36 (MAALTQKKTCSQMMEEWKEFMWNPRTREFMGRTGSS) are cytoplasmic. Residues 37–57 (WALILLFYVVFYAFLTAVFSL) traverse the membrane as a helical; Signal-anchor for type II membrane protein segment. Residues 58 to 299 (SLWVMLQTID…VIFTMKIDRL (242 aa)) lie on the Extracellular side of the membrane. N-linked (GlcNAc...) asparagine glycosylation is found at asparagine 101 and asparagine 119. 2 disulfides stabilise this stretch: cysteine 130-cysteine 152 and cysteine 162-cysteine 178. N-linked (GlcNAc...) asparagine glycans are attached at residues asparagine 199, asparagine 226, asparagine 247, and asparagine 259. Cysteine 206 and cysteine 270 are joined by a disulfide.

This sequence belongs to the X(+)/potassium ATPases subunit beta family. As to quaternary structure, the sodium/potassium-transporting ATPase is composed of a catalytic alpha subunit, an auxiliary non-catalytic beta subunit and an additional regulatory subunit. As to expression, expressed at a high level in bladder epithelial cells and eye and at a trace level in kidney; it is not detectable in significant amounts in the stomach, colon and small intestine.

The protein localises to the cell membrane. This is the non-catalytic component of the active enzyme, which catalyzes the hydrolysis of ATP coupled with the exchange of Na(+) and K(+) ions across the plasma membrane. The exact function of this glycoprotein is not known. Some specific sequence of the beta subunit can modulate the activation of the Na,K-pump by extracellular potassium ions. The protein is Sodium/potassium-transporting ATPase subunit beta-2 of Rhinella marina (Cane toad).